Consider the following 464-residue polypeptide: Cysteine--tRNA ligase (464 aa).

C27 contacts Zn(2+). Positions 29 to 39 match the 'HIGH' region motif; the sequence is PTVYNYFHIGN. Zn(2+)-binding residues include C207, H232, and E236. The short motif at 264-268 is the 'KMSKS' region element; that stretch reads KMSKS. Position 267 (K267) interacts with ATP.

This sequence belongs to the class-I aminoacyl-tRNA synthetase family. Monomer. Requires Zn(2+) as cofactor.

The protein localises to the cytoplasm. The enzyme catalyses tRNA(Cys) + L-cysteine + ATP = L-cysteinyl-tRNA(Cys) + AMP + diphosphate. This Alkaliphilus oremlandii (strain OhILAs) (Clostridium oremlandii (strain OhILAs)) protein is Cysteine--tRNA ligase.